A 476-amino-acid polypeptide reads, in one-letter code: Aspartyl/glutamyl-tRNA(Asn/Gln) amidotransferase subunit B (476 aa).

It belongs to the GatB/GatE family. GatB subfamily. Heterotrimer of A, B and C subunits.

The enzyme catalyses L-glutamyl-tRNA(Gln) + L-glutamine + ATP + H2O = L-glutaminyl-tRNA(Gln) + L-glutamate + ADP + phosphate + H(+). It carries out the reaction L-aspartyl-tRNA(Asn) + L-glutamine + ATP + H2O = L-asparaginyl-tRNA(Asn) + L-glutamate + ADP + phosphate + 2 H(+). Allows the formation of correctly charged Asn-tRNA(Asn) or Gln-tRNA(Gln) through the transamidation of misacylated Asp-tRNA(Asn) or Glu-tRNA(Gln) in organisms which lack either or both of asparaginyl-tRNA or glutaminyl-tRNA synthetases. The reaction takes place in the presence of glutamine and ATP through an activated phospho-Asp-tRNA(Asn) or phospho-Glu-tRNA(Gln). The polypeptide is Aspartyl/glutamyl-tRNA(Asn/Gln) amidotransferase subunit B (Clostridium botulinum (strain Langeland / NCTC 10281 / Type F)).